Reading from the N-terminus, the 149-residue chain is MSSNKIVLSSSDGESFEVEEAVARKLKIVEHMIEDDCVVTEVPLQNVTGKILSIVVEYCKKHVVDEESDEFKTWDEEFMKKFDQPTVFQLLLAANYLNIKGLLDLSAQTVADRIKDKTPEEIREIFNIENDFTPEEEAAVRKENAWAFE.

An interaction with the F-box domain of F-box proteins region spans residues 91-149 (LLAANYLNIKGLLDLSAQTVADRIKDKTPEEIREIFNIENDFTPEEEAAVRKENAWAFE).

Belongs to the SKP1 family. Part of a SCF (SKP1-cullin-F-box) protein ligase complex. Interacts with CPR1/CPR30, At3g61590, At4g39550 and At5g49610. Restricted to inflorescences, pollen and leaves.

The protein resides in the nucleus. Its pathway is protein modification; protein ubiquitination. In terms of biological role, involved in ubiquitination and subsequent proteasomal degradation of target proteins. Together with CUL1, RBX1 and a F-box protein, it forms a SCF E3 ubiquitin ligase complex. The functional specificity of this complex depends on the type of F-box protein. In the SCF complex, it serves as an adapter that links the F-box protein to CUL1. The polypeptide is SKP1-like protein 14 (ASK14) (Arabidopsis thaliana (Mouse-ear cress)).